Here is a 362-residue protein sequence, read N- to C-terminus: MERIVVTLGERSYPITIASGLFNEPASFLPLKSGEQVMLVTNETLAPLYLDKVRGVLEQAGVNVDSVILPDGEQYKSLAVLDTVFTALLQKPHGRDTTLVALGGGVVGDLTGFAAASYQRGVRFIQVPTTLLSQVDSSVGGKTAVNHPLGKNMIGAFYQPASVVVDLDCLKTLPPRELASGLAEVIKYGIILDGAFFNWLEENLDALLRLDGPAMAYCIRRCCELKPQVVAADERETGLRALLNLGHTFGHAIEAEMGYGNWLHGEAVAAGMVMAARTSERLGQFSSAETQRIITLLTRAGLPVNGPREMSAQAYLPHMLRDKKVLAGEMRLILPLAIGKSEVRSGVSHELVLNAIADCQSA.

NAD(+) is bound by residues 71–76, 105–109, 129–130, Lys-142, Lys-151, and 169–172; these read DGEQYK, GVVGD, TT, and CLKT. The Zn(2+) site is built by Glu-184, His-247, and His-264.

The protein belongs to the sugar phosphate cyclases superfamily. Dehydroquinate synthase family. The cofactor is Co(2+). It depends on Zn(2+) as a cofactor. NAD(+) is required as a cofactor.

It is found in the cytoplasm. The catalysed reaction is 7-phospho-2-dehydro-3-deoxy-D-arabino-heptonate = 3-dehydroquinate + phosphate. It participates in metabolic intermediate biosynthesis; chorismate biosynthesis; chorismate from D-erythrose 4-phosphate and phosphoenolpyruvate: step 2/7. Functionally, catalyzes the conversion of 3-deoxy-D-arabino-heptulosonate 7-phosphate (DAHP) to dehydroquinate (DHQ). The sequence is that of 3-dehydroquinate synthase from Escherichia coli O6:K15:H31 (strain 536 / UPEC).